A 495-amino-acid chain; its full sequence is Lysine--tRNA ligase (495 aa).

Positions 406 and 413 each coordinate Mg(2+).

Belongs to the class-II aminoacyl-tRNA synthetase family. In terms of assembly, homodimer. Requires Mg(2+) as cofactor.

It is found in the cytoplasm. It carries out the reaction tRNA(Lys) + L-lysine + ATP = L-lysyl-tRNA(Lys) + AMP + diphosphate. This is Lysine--tRNA ligase from Leptospira borgpetersenii serovar Hardjo-bovis (strain JB197).